The chain runs to 122 residues: Holo-[acyl-carrier-protein] synthase (122 aa).

The Mg(2+) site is built by Asp-8 and Glu-58.

Belongs to the P-Pant transferase superfamily. AcpS family. Requires Mg(2+) as cofactor.

It is found in the cytoplasm. The enzyme catalyses apo-[ACP] + CoA = holo-[ACP] + adenosine 3',5'-bisphosphate + H(+). Transfers the 4'-phosphopantetheine moiety from coenzyme A to a Ser of acyl-carrier-protein. The polypeptide is Holo-[acyl-carrier-protein] synthase (Levilactobacillus brevis (strain ATCC 367 / BCRC 12310 / CIP 105137 / JCM 1170 / LMG 11437 / NCIMB 947 / NCTC 947) (Lactobacillus brevis)).